Reading from the N-terminus, the 89-residue chain is Small ribosomal subunit protein uS15 (89 aa).

This sequence belongs to the universal ribosomal protein uS15 family. Part of the 30S ribosomal subunit. Forms a bridge to the 50S subunit in the 70S ribosome, contacting the 23S rRNA.

Its function is as follows. One of the primary rRNA binding proteins, it binds directly to 16S rRNA where it helps nucleate assembly of the platform of the 30S subunit by binding and bridging several RNA helices of the 16S rRNA. In terms of biological role, forms an intersubunit bridge (bridge B4) with the 23S rRNA of the 50S subunit in the ribosome. The protein is Small ribosomal subunit protein uS15 of Lactococcus lactis subsp. lactis (strain IL1403) (Streptococcus lactis).